The sequence spans 196 residues: GTP cyclohydrolase-2 (196 aa).

A GTP-binding site is contributed by 49–53 (RVHSE). Positions 54, 65, and 67 each coordinate Zn(2+). Residues Gln70, 92–94 (EGR), and Thr114 contribute to the GTP site. Asp126 acts as the Proton acceptor in catalysis. Catalysis depends on Arg128, which acts as the Nucleophile. 2 residues coordinate GTP: Thr149 and Lys154.

Belongs to the GTP cyclohydrolase II family. In terms of assembly, homodimer. It depends on Zn(2+) as a cofactor.

It carries out the reaction GTP + 4 H2O = 2,5-diamino-6-hydroxy-4-(5-phosphoribosylamino)-pyrimidine + formate + 2 phosphate + 3 H(+). It functions in the pathway cofactor biosynthesis; riboflavin biosynthesis; 5-amino-6-(D-ribitylamino)uracil from GTP: step 1/4. Functionally, catalyzes the conversion of GTP to 2,5-diamino-6-ribosylamino-4(3H)-pyrimidinone 5'-phosphate (DARP), formate and pyrophosphate. The sequence is that of GTP cyclohydrolase-2 from Shigella boydii serotype 18 (strain CDC 3083-94 / BS512).